The chain runs to 273 residues: ATP synthase subunit a (273 aa).

The next 7 helical transmembrane spans lie at 41-61, 101-121, 122-142, 143-163, 183-203, 221-241, and 247-267; these read ILNI…LLIF, LIAP…LMDL, LAVD…ALRV, VPSA…ILII, PFNH…SLLS, LVFI…ISVP, and IIVI…YIAM.

Belongs to the ATPase A chain family. F-type ATPases have 2 components, CF(1) - the catalytic core - and CF(0) - the membrane proton channel. CF(1) has five subunits: alpha(3), beta(3), gamma(1), delta(1), epsilon(1). CF(0) has three main subunits: a(1), b(2) and c(9-12). The alpha and beta chains form an alternating ring which encloses part of the gamma chain. CF(1) is attached to CF(0) by a central stalk formed by the gamma and epsilon chains, while a peripheral stalk is formed by the delta and b chains.

It is found in the cell membrane. Functionally, key component of the proton channel; it plays a direct role in the translocation of protons across the membrane. This Baumannia cicadellinicola subsp. Homalodisca coagulata protein is ATP synthase subunit a.